Reading from the N-terminus, the 217-residue chain is GTP cyclohydrolase 1 (217 aa).

Residues Cys109, His112, and Cys180 each contribute to the Zn(2+) site.

The protein belongs to the GTP cyclohydrolase I family. Homomer.

It carries out the reaction GTP + H2O = 7,8-dihydroneopterin 3'-triphosphate + formate + H(+). Its pathway is cofactor biosynthesis; 7,8-dihydroneopterin triphosphate biosynthesis; 7,8-dihydroneopterin triphosphate from GTP: step 1/1. In Aliivibrio salmonicida (strain LFI1238) (Vibrio salmonicida (strain LFI1238)), this protein is GTP cyclohydrolase 1.